The primary structure comprises 372 residues: Protein phosphatase Mn(2+)-dependent 1K (372 aa).

Residues 1-29 (MSTAALLTLVRSGGNQVRRRVLLRARGLQ) constitute a mitochondrion transit peptide. Residues 46-61 (KWSRFDPDGSGRPATW) are critical for association with the BCKDH complex. One can recognise a PPM-type phosphatase domain in the interval 94-346 (NVGSASQIGK…DNTTAVVVPF (253 aa)). Residues Asp-127 and Gly-128 each coordinate Mn(2+). Phosphoserine is present on Ser-248. Mn(2+) contacts are provided by Asp-298 and Asp-337.

It belongs to the PP2C family. In terms of assembly, monomer. Interacts with E1 and E2 components of the branched-chain alpha-ketoacid dehydrogenase (BCKDH) complex; this interaction requires colocalization in mitochondria. Interacts with BCKDHA but not with BCKDHB of the E1 component. Interacts with the 24-meric E2 core composed of DBT monomers with a 24:1 stoichiometry; the N-terminal region (residues 49-61) of PPM1K and C-terminal linker of the lipoyl domain of DBT (residues 145-160) are critical for this interaction, whereas the lipoyl prosthetic group is dispensable. Competes with BCKDK for binding to the E2 core; this interaction is modulated by branched-chain alpha-keto acids. At steady state, BCKDH holoenzyme preferentially binds BCKDK and BCKDHA is phosphorylated. In response to high levels of branched-chain alpha-keto acids, the inhibitory BCKDK is replaced by activating PPM1K leading to BCKDHA dephosphorylation and BCAA degradation. The cofactor is Mn(2+).

It is found in the mitochondrion matrix. It catalyses the reaction O-phospho-L-seryl-[3-methyl-2-oxobutanoate dehydrogenase] + H2O = L-seryl-[3-methyl-2-oxobutanoate dehydrogenase] + phosphate. It carries out the reaction O-phospho-L-seryl-[protein] + H2O = L-seryl-[protein] + phosphate. It functions in the pathway protein modification. In terms of biological role, serine/threonine-protein phosphatase component of macronutrients metabolism. Forms a functional kinase and phosphatase pair with BCKDK, serving as a metabolic regulatory node that coordinates branched-chain amino acids (BCAAs) with glucose and lipid metabolism via two distinct phosphoprotein targets: mitochondrial BCKDHA subunit of the branched-chain alpha-ketoacid dehydrogenase (BCKDH) complex and cytosolic ACLY, a lipogenic enzyme of Krebs cycle. At high levels of branched-chain ketoacids, dephosphorylates and activates mitochondrial BCKDH complex, a multisubunit complex consisting of three multimeric components each involved in different steps of BCAA catabolism: E1 composed of BCKDHA and BCKDHB, E2 core composed of DBT monomers, and E3 composed of DLD monomers. Tightly associates with the E2 component of BCKDH complex and dephosphorylates BCKDHA on Ser-347. Regulates the reversible phosphorylation of ACLY in response to changes in cellular carbohydrate abundance such as occurs during fasting to feeding metabolic transition. At fasting state, appears to dephosphorylate ACLY on Ser-455 and inactivate it. Refeeding stimulates MLXIPL/ChREBP transcription factor, leading to increased BCKDK to PPM1K expression ratio, phosphorylation and activation of ACLY that ultimately results in the generation of malonyl-CoA and oxaloacetate immediate substrates of de novo lipogenesis and gluconeogenesis, respectively. Recognizes phosphosites having SxS or RxxS motifs and strictly depends on Mn(2+) ions for the phosphatase activity. Regulates Ca(2+)-induced opening of mitochondrial transition pore and apoptotic cell death. This chain is Protein phosphatase Mn(2+)-dependent 1K (PPM1K), found in Bos taurus (Bovine).